A 394-amino-acid chain; its full sequence is 8-amino-7-oxononanoate synthase (394 aa).

Residue R22 coordinates substrate. Residue 113 to 114 participates in pyridoxal 5'-phosphate binding; it reads GY. Residue H138 participates in substrate binding. Pyridoxal 5'-phosphate contacts are provided by S184, H212, and T240. K243 carries the post-translational modification N6-(pyridoxal phosphate)lysine. A substrate-binding site is contributed by T359.

It belongs to the class-II pyridoxal-phosphate-dependent aminotransferase family. BioF subfamily. Homodimer. Pyridoxal 5'-phosphate serves as cofactor.

The catalysed reaction is 6-carboxyhexanoyl-[ACP] + L-alanine + H(+) = (8S)-8-amino-7-oxononanoate + holo-[ACP] + CO2. It participates in cofactor biosynthesis; biotin biosynthesis. Functionally, catalyzes the decarboxylative condensation of pimeloyl-[acyl-carrier protein] and L-alanine to produce 8-amino-7-oxononanoate (AON), [acyl-carrier protein], and carbon dioxide. The chain is 8-amino-7-oxononanoate synthase from Janthinobacterium sp. (strain Marseille) (Minibacterium massiliensis).